We begin with the raw amino-acid sequence, 497 residues long: Serine hydroxymethyltransferase, mitochondrial (497 aa).

Residues 1-27 constitute a mitochondrion transit peptide; that stretch reads MFIRRLHTSSRRLTCGEALRACQQTGA. N6-(pyridoxal phosphate)lysine is present on K272.

This sequence belongs to the SHMT family. Homotetramer. Pyridoxal 5'-phosphate is required as a cofactor.

The protein resides in the mitochondrion. It carries out the reaction (6R)-5,10-methylene-5,6,7,8-tetrahydrofolate + glycine + H2O = (6S)-5,6,7,8-tetrahydrofolate + L-serine. It functions in the pathway one-carbon metabolism; tetrahydrofolate interconversion. Interconversion of serine and glycine. This is Serine hydroxymethyltransferase, mitochondrial (SHM1) from Eremothecium gossypii (strain ATCC 10895 / CBS 109.51 / FGSC 9923 / NRRL Y-1056) (Yeast).